We begin with the raw amino-acid sequence, 153 residues long: Peptide methionine sulfoxide reductase MsrA (153 aa).

The active site involves Cys-10.

Belongs to the MsrA Met sulfoxide reductase family.

The catalysed reaction is L-methionyl-[protein] + [thioredoxin]-disulfide + H2O = L-methionyl-(S)-S-oxide-[protein] + [thioredoxin]-dithiol. It carries out the reaction [thioredoxin]-disulfide + L-methionine + H2O = L-methionine (S)-S-oxide + [thioredoxin]-dithiol. Functionally, has an important function as a repair enzyme for proteins that have been inactivated by oxidation. Catalyzes the reversible oxidation-reduction of methionine sulfoxide in proteins to methionine. The chain is Peptide methionine sulfoxide reductase MsrA from Methanococcoides burtonii (strain DSM 6242 / NBRC 107633 / OCM 468 / ACE-M).